The primary structure comprises 607 residues: Autophagy-related protein 22-2 (607 aa).

The disordered stretch occupies residues 9-31; sequence FQSPSPDEGVQQRPPRYVGEDTT. A helical transmembrane segment spans residues 44–64; that stretch reads YGIAAEVFAVCGVGSFLPLTL. Asparagine 88 and asparagine 91 each carry an N-linked (GlcNAc...) asparagine glycan. 3 helical membrane passes run 111-131, 143-160, and 161-178; these read SFAM…LISF, TLLM…MLFV, and FIAP…VVGV. A disordered region spans residues 203-263; the sequence is QEGKADDGTE…GMGTKAPLSS (61 aa). Asparagine 235 carries an N-linked (GlcNAc...) asparagine glycan. The next 8 helical transmembrane spans lie at 277-297, 310-330, 381-401, 415-435, 450-470, 484-504, 521-543, and 552-572; these read GIGL…IMLL, TLPM…FTLV, VLIF…VSGT, PLIG…AFLW, IILC…AYIP, WEIF…ASYC, YALY…GGIV, and GFFF…MVNA. The interval 585–607 is disordered; sequence TLGKSHGGPAEDAQEAEGLLARE.

It belongs to the ATG22 family.

The protein resides in the vacuole membrane. Vacuolar effluxer which mediate the efflux of amino acids resulting from autophagic degradation. The release of autophagic amino acids allows the maintenance of protein synthesis and viability during nitrogen starvation. The polypeptide is Autophagy-related protein 22-2 (atg22-2) (Penicillium rubens (strain ATCC 28089 / DSM 1075 / NRRL 1951 / Wisconsin 54-1255) (Penicillium chrysogenum)).